The following is a 560-amino-acid chain: NAD-dependent malic enzyme (560 aa).

The active-site Proton donor is the Tyr100. Position 153 (Arg153) interacts with NAD(+). The Proton acceptor role is filled by Lys171. The a divalent metal cation site is built by Glu242, Asp243, and Asp266. Residues Asp266 and Asn413 each contribute to the NAD(+) site.

Belongs to the malic enzymes family. As to quaternary structure, homotetramer. Mg(2+) is required as a cofactor. Mn(2+) serves as cofactor.

It catalyses the reaction (S)-malate + NAD(+) = pyruvate + CO2 + NADH. The enzyme catalyses oxaloacetate + H(+) = pyruvate + CO2. This Psychrobacter cryohalolentis (strain ATCC BAA-1226 / DSM 17306 / VKM B-2378 / K5) protein is NAD-dependent malic enzyme.